The primary structure comprises 642 residues: 1-deoxy-D-xylulose-5-phosphate synthase (642 aa).

Thiamine diphosphate-binding positions include histidine 79 and 120-122 (AHS). Aspartate 155 serves as a coordination point for Mg(2+). Residues 156-157 (GS), asparagine 184, tyrosine 293, and glutamate 375 each bind thiamine diphosphate. Asparagine 184 provides a ligand contact to Mg(2+).

Belongs to the transketolase family. DXPS subfamily. In terms of assembly, homodimer. Mg(2+) is required as a cofactor. Thiamine diphosphate serves as cofactor.

The enzyme catalyses D-glyceraldehyde 3-phosphate + pyruvate + H(+) = 1-deoxy-D-xylulose 5-phosphate + CO2. Its pathway is metabolic intermediate biosynthesis; 1-deoxy-D-xylulose 5-phosphate biosynthesis; 1-deoxy-D-xylulose 5-phosphate from D-glyceraldehyde 3-phosphate and pyruvate: step 1/1. Functionally, catalyzes the acyloin condensation reaction between C atoms 2 and 3 of pyruvate and glyceraldehyde 3-phosphate to yield 1-deoxy-D-xylulose-5-phosphate (DXP). In Ruegeria pomeroyi (strain ATCC 700808 / DSM 15171 / DSS-3) (Silicibacter pomeroyi), this protein is 1-deoxy-D-xylulose-5-phosphate synthase.